The following is a 239-amino-acid chain: MEIFPAIDLKEGRCVRLYQGEFSKETVMNEDPVAQAIIFETFGAKRLHIVDLDGAVAGESLNLSVIERICKAVRIPVQVGGGIRSLVSVEKLFSVGVDKVILGTAALYDKPFLEETVRLYKEKIIVGIDAKNGFVATRGWLDVSEISYIDLAKQMEKIGVQTIVFTDISKDGTLAGPNVEQLELLQKNVATRVIASGGIASIQDVKKLNDMNIYGVIIGKALYEKTIDLEEVLEVTKLC.

Residue D8 is the Proton acceptor of the active site. D129 functions as the Proton donor in the catalytic mechanism.

This sequence belongs to the HisA/HisF family.

It is found in the cytoplasm. It carries out the reaction 1-(5-phospho-beta-D-ribosyl)-5-[(5-phospho-beta-D-ribosylamino)methylideneamino]imidazole-4-carboxamide = 5-[(5-phospho-1-deoxy-D-ribulos-1-ylimino)methylamino]-1-(5-phospho-beta-D-ribosyl)imidazole-4-carboxamide. It functions in the pathway amino-acid biosynthesis; L-histidine biosynthesis; L-histidine from 5-phospho-alpha-D-ribose 1-diphosphate: step 4/9. This chain is 1-(5-phosphoribosyl)-5-[(5-phosphoribosylamino)methylideneamino] imidazole-4-carboxamide isomerase, found in Bacillus cereus (strain Q1).